The following is a 57-amino-acid chain: Large ribosomal subunit protein bL32 (57 aa).

It belongs to the bacterial ribosomal protein bL32 family.

This is Large ribosomal subunit protein bL32 from Halothermothrix orenii (strain H 168 / OCM 544 / DSM 9562).